Here is a 164-residue protein sequence, read N- to C-terminus: HTH-type transcriptional regulator IscR (164 aa).

The HTH rrf2-type domain occupies 2–131 (RLTSKGRYAV…NNITLAELVN (130 aa)). Residues 28 to 51 (LADISERQGISLSYLEQLFSRLRK) constitute a DNA-binding region (H-T-H motif). [2Fe-2S] cluster contacts are provided by C92, C98, and C104. Residues 143–164 (NNDTRRTANGRPQETINVNLRA) are disordered. Residues 152–164 (GRPQETINVNLRA) show a composition bias toward polar residues.

Requires [2Fe-2S] cluster as cofactor.

Its function is as follows. Regulates the transcription of several operons and genes involved in the biogenesis of Fe-S clusters and Fe-S-containing proteins. This chain is HTH-type transcriptional regulator IscR, found in Yersinia enterocolitica serotype O:8 / biotype 1B (strain NCTC 13174 / 8081).